The following is a 201-amino-acid chain: MDSTGEFCWICHQPEGPLKRFCGCKGSCAVSHQDCLRGWLETSRRQTCALCGTPYSMKWKTKPLREWTWGEEEVLAAMEACLPLVLIPLAVLMIVMGTWLLVNHNGFLSPRMQVVLVVIVLLAMIVFSASASYVMVEGPGCLDTCTAKNSTVTVNSIDEAIATQQPTKTDLGLARETLSTRFRRGKCRSCCRLGCVRLCCV.

The RING-CH-type zinc-finger motif lies at M1–K58. The Cytoplasmic segment spans residues M1–C81. C8, C11, C22, C24, H32, C35, C48, and C51 together coordinate Zn(2+). Residues G52 to E79 form a DIRT region. A helical transmembrane segment spans residues L82–V102. Residues N103–Q113 are Extracellular-facing. The chain crosses the membrane as a helical span at residues V114 to V134. The Cytoplasmic segment spans residues M135–V201.

Interacts with host UBE2J2.

The protein localises to the host endoplasmic reticulum membrane. The enzyme catalyses [E2 ubiquitin-conjugating enzyme]-S-ubiquitinyl-L-cysteine + [acceptor protein]-L-cysteine = [E2 ubiquitin-conjugating enzyme]-L-cysteine + [acceptor protein]-S-ubiquitinyl-L-cysteine.. Its pathway is protein modification; protein ubiquitination. E3 ubiquitin-protein ligase that mediates ubiquitination of host surface class I (MHC-I) H-2D(b)/H2-D1 and H-2K(b)/H2-K1 molecules before they exit the endoplasmic reticulum, leading to their degradation by the endoplasmic reticulum-associated degradation (ERAD) system, thus blocking the immune detection of virus-infected cells. Mediates ubiquitination of lysine, as well as serine and threonine residues present in the cytoplasmic tail of surface class I molecules. Promotes ubiquitination of hydroxylated serine or threonine residues via ester bonds instead of the classical isopeptide linkage. This chain is E3 ubiquitin-protein ligase MIR1 (K3), found in Murid herpesvirus 4 (MuHV-4).